A 23-amino-acid chain; its full sequence is Cysteine proteinase (23 aa).

Basic and acidic residues predominate over residues 1-10 (ADSLDWREKG). The interval 1–23 (ADSLDWREKGVVNSIKDQAQXGS) is disordered.

The protein belongs to the peptidase C1 family.

The chain is Cysteine proteinase from Tritrichomonas foetus (Trichomonas foetus).